A 208-amino-acid chain; its full sequence is 3-demethoxyubiquinol 3-hydroxylase (208 aa).

Glutamate 57, glutamate 87, histidine 90, glutamate 139, glutamate 171, and histidine 174 together coordinate Fe cation.

Belongs to the COQ7 family. Fe cation serves as cofactor.

It is found in the cell membrane. The enzyme catalyses a 5-methoxy-2-methyl-3-(all-trans-polyprenyl)benzene-1,4-diol + AH2 + O2 = a 3-demethylubiquinol + A + H2O. Its pathway is cofactor biosynthesis; ubiquinone biosynthesis. Catalyzes the hydroxylation of 2-nonaprenyl-3-methyl-6-methoxy-1,4-benzoquinol during ubiquinone biosynthesis. This is 3-demethoxyubiquinol 3-hydroxylase from Burkholderia mallei (strain NCTC 10229).